The sequence spans 182 residues: Keratin, type II cytoskeletal 60 kDa, component III (182 aa).

An IF rod domain is found at 1–63 (ERGELALKDA…KLLEGEECRL (63 aa)). Residues 1-63 (ERGELALKDA…KLLEGEECRL (63 aa)) form a coil 2 region. The interval 63–182 (LSGEGVGPVN…TSSSRKSFKS (120 aa)) is tail. Residues 157 to 182 (FGSGGGSSSSVKFVSTTSSSRKSFKS) are disordered. The span at 164–182 (SSSVKFVSTTSSSRKSFKS) shows a compositional bias: low complexity.

The protein belongs to the intermediate filament family. In terms of assembly, heterotetramer of two type I and two type II keratins.

The protein is Keratin, type II cytoskeletal 60 kDa, component III of Bos taurus (Bovine).